A 344-amino-acid chain; its full sequence is N-acetyl-gamma-glutamyl-phosphate reductase (344 aa).

Cysteine 150 is a catalytic residue.

This sequence belongs to the NAGSA dehydrogenase family. Type 1 subfamily.

It is found in the cytoplasm. The enzyme catalyses N-acetyl-L-glutamate 5-semialdehyde + phosphate + NADP(+) = N-acetyl-L-glutamyl 5-phosphate + NADPH + H(+). The protein operates within amino-acid biosynthesis; L-arginine biosynthesis; N(2)-acetyl-L-ornithine from L-glutamate: step 3/4. Its function is as follows. Catalyzes the NADPH-dependent reduction of N-acetyl-5-glutamyl phosphate to yield N-acetyl-L-glutamate 5-semialdehyde. The protein is N-acetyl-gamma-glutamyl-phosphate reductase of Pseudomonas fluorescens (strain SBW25).